A 360-amino-acid polypeptide reads, in one-letter code: S-adenosylmethionine:tRNA ribosyltransferase-isomerase (360 aa).

This sequence belongs to the QueA family. As to quaternary structure, monomer.

It is found in the cytoplasm. The catalysed reaction is 7-aminomethyl-7-carbaguanosine(34) in tRNA + S-adenosyl-L-methionine = epoxyqueuosine(34) in tRNA + adenine + L-methionine + 2 H(+). The protein operates within tRNA modification; tRNA-queuosine biosynthesis. In terms of biological role, transfers and isomerizes the ribose moiety from AdoMet to the 7-aminomethyl group of 7-deazaguanine (preQ1-tRNA) to give epoxyqueuosine (oQ-tRNA). The polypeptide is S-adenosylmethionine:tRNA ribosyltransferase-isomerase (Burkholderia pseudomallei (strain K96243)).